Consider the following 186-residue polypeptide: Oligoribonuclease (186 aa).

In terms of domain architecture, Exonuclease spans 12–175 (LIWIDLEMTG…DDIKDSIKEL (164 aa)). Residue Tyr133 is part of the active site.

The protein belongs to the oligoribonuclease family.

Its subcellular location is the cytoplasm. In terms of biological role, 3'-to-5' exoribonuclease specific for small oligoribonucleotides. The chain is Oligoribonuclease from Wigglesworthia glossinidia brevipalpis.